The primary structure comprises 645 residues: Iron-regulated surface determinant protein B (645 aa).

The signal sequence occupies residues 1 to 40 (MNKQQKEFKSFYSIRKSSLGVASVAISTLLLLMSNGEAQA). Positions 12–23 (YSIRKSSLGVAS) match the YSIRK-G/S signaling motif motif. Residues 38-53 (AQAAAEETGGTNTEAQ) show a composition bias toward low complexity. Positions 38–113 (AQAAAEETGG…APKETKEVKP (76 aa)) are disordered. Basic and acidic residues predominate over residues 84-113 (KEVEAPTSETKEAKEVKEVKAPKETKEVKP). NEAT domains follow at residues 144–269 (SAPN…KFKT) and 341–458 (KMTD…TKAN). M362 and Y440 together coordinate heme. 2 stretches are compositionally biased toward basic and acidic residues: residues 458–476 (NTDKSNKKEQQDNSAKKEA) and 489–534 (VEKE…KGEV). Positions 458–619 (NTDKSNKKEQ…LPQTGEESNK (162 aa)) are disordered. Low complexity predominate over residues 535-560 (ESSSTTPTKVVSTTQNVAKPTTASSK). The span at 585–615 (NIKNTNDGHTQSQNNKNTQENKAKSLPQTGE) shows a compositional bias: polar residues. Residues 610–614 (LPQTG) carry the LPXTG sorting signal motif. Position 613 is a pentaglycyl murein peptidoglycan amidated threonine (T613). Residues 614–645 (GEESNKDMTLPLMALLALSSIVAFVLPRKRKN) constitute a propeptide, removed by sortase.

Belongs to the IsdB family. In terms of assembly, interacts with host HBA; this interaction allows heme extraction as iron source. Interacts with IsdA.

It is found in the secreted. The protein localises to the cell wall. Functionally, cell wall-anchored surface receptor that extracts heme from oxidized metHb to enable growth on hemoglobin as a sole iron source. Rapidly extracts heme from hemoglobin and transfers it to IsdA or IsdC, which then relays it to the membrane transporter/IsdEF for internalization. Also promotes resistance to hydrogen peroxide and killing by neutrophils. This chain is Iron-regulated surface determinant protein B (isdB), found in Staphylococcus aureus (strain USA300 / TCH1516).